Here is a 197-residue protein sequence, read N- to C-terminus: Nascent polypeptide-associated complex subunit alpha (197 aa).

Residues 1-20 (MAEPVEDSVDEISSEGDSDV) show a composition bias toward acidic residues. Disordered stretches follow at residues 1–46 (MAEP…RKLL) and 120–154 (GADR…SKAD). One can recognise an NAC-A/B domain in the interval 36–101 (DKNERKSRKL…AKVEDMSQNS (66 aa)). Residues 134-154 (SGHDHAHDHDHSHGDCASKAD) show a composition bias toward basic and acidic residues. The UBA domain occupies 158 to 195 (VNQSDIDLVVSQVGCTREQAVEALIKNKGDIVETIMQL).

It belongs to the NAC-alpha family.

In terms of biological role, may promote appropriate targeting of ribosome-nascent polypeptide complexes. The sequence is that of Nascent polypeptide-associated complex subunit alpha from Babesia divergens.